Consider the following 577-residue polypeptide: Isocitrate dehydrogenase kinase/phosphatase (577 aa).

ATP-binding positions include Ala324–Leu330 and Lys345. Residue Asp380 is part of the active site.

The protein belongs to the AceK family.

The protein resides in the cytoplasm. It carries out the reaction L-seryl-[isocitrate dehydrogenase] + ATP = O-phospho-L-seryl-[isocitrate dehydrogenase] + ADP + H(+). In terms of biological role, bifunctional enzyme which can phosphorylate or dephosphorylate isocitrate dehydrogenase (IDH) on a specific serine residue. This is a regulatory mechanism which enables bacteria to bypass the Krebs cycle via the glyoxylate shunt in response to the source of carbon. When bacteria are grown on glucose, IDH is fully active and unphosphorylated, but when grown on acetate or ethanol, the activity of IDH declines drastically concomitant with its phosphorylation. This chain is Isocitrate dehydrogenase kinase/phosphatase, found in Pseudoalteromonas atlantica (strain T6c / ATCC BAA-1087).